Reading from the N-terminus, the 458-residue chain is Bifunctional protein GlmU (458 aa).

Positions M1–K230 are pyrophosphorylase. UDP-N-acetyl-alpha-D-glucosamine is bound by residues L9 to G12, K23, Q75, and G80 to T81. D104 contributes to the Mg(2+) binding site. UDP-N-acetyl-alpha-D-glucosamine is bound by residues G139, E155, N170, and N228. Residue N228 participates in Mg(2+) binding. Residues I231–Q251 are linker. An N-acetyltransferase region spans residues G252–N458. UDP-N-acetyl-alpha-D-glucosamine-binding residues include R334 and K352. Catalysis depends on H364, which acts as the Proton acceptor. Residues Y367 and N378 each coordinate UDP-N-acetyl-alpha-D-glucosamine. Residues A381, N387–Y388, S406, A424, and R441 each bind acetyl-CoA.

In the N-terminal section; belongs to the N-acetylglucosamine-1-phosphate uridyltransferase family. The protein in the C-terminal section; belongs to the transferase hexapeptide repeat family. Homotrimer. The cofactor is Mg(2+).

The protein localises to the cytoplasm. The enzyme catalyses alpha-D-glucosamine 1-phosphate + acetyl-CoA = N-acetyl-alpha-D-glucosamine 1-phosphate + CoA + H(+). The catalysed reaction is N-acetyl-alpha-D-glucosamine 1-phosphate + UTP + H(+) = UDP-N-acetyl-alpha-D-glucosamine + diphosphate. Its pathway is nucleotide-sugar biosynthesis; UDP-N-acetyl-alpha-D-glucosamine biosynthesis; N-acetyl-alpha-D-glucosamine 1-phosphate from alpha-D-glucosamine 6-phosphate (route II): step 2/2. It participates in nucleotide-sugar biosynthesis; UDP-N-acetyl-alpha-D-glucosamine biosynthesis; UDP-N-acetyl-alpha-D-glucosamine from N-acetyl-alpha-D-glucosamine 1-phosphate: step 1/1. It functions in the pathway bacterial outer membrane biogenesis; LPS lipid A biosynthesis. In terms of biological role, catalyzes the last two sequential reactions in the de novo biosynthetic pathway for UDP-N-acetylglucosamine (UDP-GlcNAc). The C-terminal domain catalyzes the transfer of acetyl group from acetyl coenzyme A to glucosamine-1-phosphate (GlcN-1-P) to produce N-acetylglucosamine-1-phosphate (GlcNAc-1-P), which is converted into UDP-GlcNAc by the transfer of uridine 5-monophosphate (from uridine 5-triphosphate), a reaction catalyzed by the N-terminal domain. This chain is Bifunctional protein GlmU, found in Nitrosomonas europaea (strain ATCC 19718 / CIP 103999 / KCTC 2705 / NBRC 14298).